The following is a 497-amino-acid chain: Glycerol kinase (497 aa).

An ADP-binding site is contributed by Thr-11. Thr-11, Ser-12, and Ser-13 together coordinate ATP. Sn-glycerol 3-phosphate is bound at residue Thr-11. Arg-15 contributes to the ADP binding site. Sn-glycerol 3-phosphate is bound by residues Arg-81, Glu-82, Tyr-133, and Asp-242. Residues Arg-81, Glu-82, Tyr-133, Asp-242, and Gln-243 each contribute to the glycerol site. Positions 264 and 307 each coordinate ADP. ATP is bound by residues Thr-264, Gly-307, Gln-311, and Gly-412. Positions 412 and 416 each coordinate ADP.

The protein belongs to the FGGY kinase family.

The enzyme catalyses glycerol + ATP = sn-glycerol 3-phosphate + ADP + H(+). It participates in polyol metabolism; glycerol degradation via glycerol kinase pathway; sn-glycerol 3-phosphate from glycerol: step 1/1. Its activity is regulated as follows. Inhibited by fructose 1,6-bisphosphate (FBP). In terms of biological role, key enzyme in the regulation of glycerol uptake and metabolism. Catalyzes the phosphorylation of glycerol to yield sn-glycerol 3-phosphate. The chain is Glycerol kinase from Variovorax paradoxus (strain S110).